The sequence spans 110 residues: Protein YcgL (110 aa).

A YcgL domain is found at 14–98 (MFCVIYRSSK…PPEDLLKQHL (85 aa)). The disordered stretch occupies residues 88 to 110 (PPPEDLLKQHLSSVGQNTSPADR). Polar residues predominate over residues 97 to 110 (HLSSVGQNTSPADR).

The protein is Protein YcgL of Salmonella paratyphi A (strain ATCC 9150 / SARB42).